We begin with the raw amino-acid sequence, 1065 residues long: WD repeat-containing protein on Y chromosome (1065 aa).

8 WD repeats span residues 153-197, 326-365, 369-408, 459-498, 511-550, 598-638, 745-784, and 828-867; these read EEVT…IRTA, RVPL…EPSA, GHNG…LLQT, THAA…RKII, IIDI…VVRN, FHTD…RRYS, KTGD…VPEA, and AHLK…LGTL. A compositionally biased stretch (basic and acidic residues) spans 915–925; sequence PAKRAEVKAPE. 2 disordered regions span residues 915-936 and 1024-1065; these read PAKR…QTDD and GSAL…QQSE. Acidic residues predominate over residues 926–936; it reads DRDEETAQTDD.

In Drosophila persimilis (Fruit fly), this protein is WD repeat-containing protein on Y chromosome.